Here is a 356-residue protein sequence, read N- to C-terminus: PEP-dependent dihydroxyacetone kinase, dihydroxyacetone-binding subunit DhaK (356 aa).

The 346-residue stretch at 7 to 352 folds into the DhaK domain; that stretch reads DVQDVLDEQL…WDAPVHTPAL (346 aa). Residues 53 to 56, Lys104, and Asp109 each bind dihydroxyacetone; that span reads GSGH. His56 functions as the Proton acceptor in the catalytic mechanism. Residue His218 is the Tele-hemiaminal-histidine intermediate of the active site.

In terms of assembly, homodimer. The dihydroxyacetone kinase complex is composed of a homodimer of DhaM, a homodimer of DhaK and the subunit DhaL. DhaL also forms a complex with DhaR.

The enzyme catalyses dihydroxyacetone + phosphoenolpyruvate = dihydroxyacetone phosphate + pyruvate. The protein operates within polyol metabolism; glycerol degradation. Inhibited by chloro-3-hydroxyacetone and D,L-glyceraldehyde. Functionally, dihydroxyacetone binding subunit of the dihydroxyacetone kinase, which is responsible for the phosphoenolpyruvate (PEP)-dependent phosphorylation of dihydroxyacetone via a phosphoryl group transfer from DhaL-ATP. Binds covalently dihydroxyacetone in hemiaminal linkage. DhaK also acts as corepressor of the transcription activator DhaR by binding to the sensor domain of DhaR. In the presence of dihydroxyacetone, DhaL-ADP displaces DhaK and stimulates DhaR activity. In the absence of dihydroxyacetone, DhaL-ADP is converted by the PTS to DhaL-ATP, which does not bind to DhaR. In Escherichia coli (strain K12), this protein is PEP-dependent dihydroxyacetone kinase, dihydroxyacetone-binding subunit DhaK.